Consider the following 218-residue polypeptide: Phosphatidylserine decarboxylase proenzyme (218 aa).

Catalysis depends on Ser183, which acts as the Schiff-base intermediate with substrate; via pyruvic acid. Residue Ser183 is modified to Pyruvic acid (Ser); by autocatalysis.

Belongs to the phosphatidylserine decarboxylase family. PSD-A subfamily. As to quaternary structure, heterodimer of a large membrane-associated beta subunit and a small pyruvoyl-containing alpha subunit. Pyruvate serves as cofactor. Post-translationally, is synthesized initially as an inactive proenzyme. Formation of the active enzyme involves a self-maturation process in which the active site pyruvoyl group is generated from an internal serine residue via an autocatalytic post-translational modification. Two non-identical subunits are generated from the proenzyme in this reaction, and the pyruvate is formed at the N-terminus of the alpha chain, which is derived from the carboxyl end of the proenzyme. The post-translation cleavage follows an unusual pathway, termed non-hydrolytic serinolysis, in which the side chain hydroxyl group of the serine supplies its oxygen atom to form the C-terminus of the beta chain, while the remainder of the serine residue undergoes an oxidative deamination to produce ammonia and the pyruvoyl prosthetic group on the alpha chain.

It is found in the cell membrane. The catalysed reaction is a 1,2-diacyl-sn-glycero-3-phospho-L-serine + H(+) = a 1,2-diacyl-sn-glycero-3-phosphoethanolamine + CO2. The protein operates within phospholipid metabolism; phosphatidylethanolamine biosynthesis; phosphatidylethanolamine from CDP-diacylglycerol: step 2/2. In terms of biological role, catalyzes the formation of phosphatidylethanolamine (PtdEtn) from phosphatidylserine (PtdSer). The chain is Phosphatidylserine decarboxylase proenzyme from Magnetococcus marinus (strain ATCC BAA-1437 / JCM 17883 / MC-1).